We begin with the raw amino-acid sequence, 192 residues long: Thymidine kinase (192 aa).

Residues Ser9–Ser16 and Asp87–Gln90 each bind ATP. The Proton acceptor role is filled by Glu88. Cys145, Cys147, Cys182, and His185 together coordinate Zn(2+).

It belongs to the thymidine kinase family. As to quaternary structure, homotetramer.

The protein resides in the cytoplasm. The enzyme catalyses thymidine + ATP = dTMP + ADP + H(+). The chain is Thymidine kinase from Vibrio vulnificus (strain CMCP6).